Consider the following 471-residue polypeptide: Ubiquitin carboxyl-terminal hydrolase calypso (471 aa).

Residues 45–276 enclose the UCH catalytic domain; that stretch reads GWLELESDPG…IRFNLMAVVP (232 aa). The Nucleophile role is filled by C131. H213 serves as the catalytic Proton donor. 2 coiled-coil regions span residues 240–256 and 298–324; these read WEDSEDWTDKFRRVMAE and GTLQKLLKADEQGESGNGDSQRPDTPT. The segment at 307–326 is disordered; it reads DEQGESGNGDSQRPDTPTTL. The segment covering 314-326 has biased composition (polar residues); it reads NGDSQRPDTPTTL. Residues 375-403 enclose the ULD domain; it reads NYDKFICTFLSMLAHQGVLGELVSQHLLP. Positions 405–471 are positively charged C-terminal tail required for binding nucleosomes; that stretch reads KKVSGQGAAN…KGRNKCRKRK (67 aa). A disordered region spans residues 412-471; it reads AANRISKQSTTASAGGSTAAGTASTPKTQQQQAAAAKNGKSPSKTPGRRRKGRNKCRKRK. Residues 420–447 show a composition bias toward low complexity; it reads STTASAGGSTAAGTASTPKTQQQQAAAA. A compositionally biased stretch (basic residues) spans 457–471; the sequence is PGRRRKGRNKCRKRK.

This sequence belongs to the peptidase C12 family. BAP1 subfamily. Catalytic component of the polycomb repressive deubiquitinase (PR-DUB) complex, at least composed of caly/calypso, Asx and sba (MBD5/6 homolog). The PR-DUB complex associates with nucleosomes to mediate deubiquitination of histone H2AK118ub1 substrates; the association requires the positively charged C-terminal tail of caly, probably due to direct binding of DNA. Interacts (via ULD domain) with Asx (via DEUBAD domain); the interaction produces a stable heterodimer with a composite binding site for ubiquitin. Homodimerizes (via coiled-coil hinge-region between the UCH and ULD domains) to mediate assembly of 2 copies of the caly-Asx heterodimer into a bisymmetric tetramer; dimerization enhances PR-DUB association with nucleosomes.

Its subcellular location is the nucleus. It carries out the reaction Thiol-dependent hydrolysis of ester, thioester, amide, peptide and isopeptide bonds formed by the C-terminal Gly of ubiquitin (a 76-residue protein attached to proteins as an intracellular targeting signal).. Catalytic component of the polycomb repressive deubiquitinase (PR-DUB) complex, a complex that specifically mediates deubiquitination of histone H2A monoubiquitinated at 'Lys-119' (H2AK118ub1). Mediates bisymmetric organization of the PR-DUB complex and is involved in association with nucleosomes to mediate deubiquitination. Does not deubiquitinate monoubiquitinated histone H2B. Required to maintain the transcriptionally repressive state of homeotic genes throughout development. The PR-DUB complex has weak or no activity toward 'Lys-48'- and 'Lys-63'-linked polyubiquitin chains. Polycomb group (PcG) protein. This is Ubiquitin carboxyl-terminal hydrolase calypso from Drosophila melanogaster (Fruit fly).